The chain runs to 364 residues: D-alanine--D-alanine ligase (364 aa).

One can recognise an ATP-grasp domain in the interval K146–L352. T179–E234 is a binding site for ATP. Positions 305, 319, and 321 each coordinate Mg(2+).

It belongs to the D-alanine--D-alanine ligase family. Mg(2+) serves as cofactor. Mn(2+) is required as a cofactor.

The protein localises to the cytoplasm. The enzyme catalyses 2 D-alanine + ATP = D-alanyl-D-alanine + ADP + phosphate + H(+). It functions in the pathway cell wall biogenesis; peptidoglycan biosynthesis. Its function is as follows. Cell wall formation. The sequence is that of D-alanine--D-alanine ligase from Chlorobaculum parvum (strain DSM 263 / NCIMB 8327) (Chlorobium vibrioforme subsp. thiosulfatophilum).